The chain runs to 334 residues: Ferredoxin--NADP reductase (334 aa).

FAD contacts are provided by Asp-32, Gln-40, Tyr-45, Val-85, Phe-120, Asp-287, and Thr-327.

The protein belongs to the ferredoxin--NADP reductase type 2 family. Homodimer. FAD serves as cofactor.

It carries out the reaction 2 reduced [2Fe-2S]-[ferredoxin] + NADP(+) + H(+) = 2 oxidized [2Fe-2S]-[ferredoxin] + NADPH. The polypeptide is Ferredoxin--NADP reductase (Wolbachia pipientis subsp. Culex pipiens (strain wPip)).